A 230-amino-acid polypeptide reads, in one-letter code: Fibrillarin-like rRNA/tRNA 2'-O-methyltransferase (230 aa).

S-adenosyl-L-methionine-binding positions include 87–88, 105–106, 130–131, and 150–153; these read TT, EF, DA, and DVAQ.

It belongs to the methyltransferase superfamily. Fibrillarin family. As to quaternary structure, interacts with nop5. Component of box C/D small ribonucleoprotein (sRNP) particles that contain rpl7ae, FlpA and nop5, plus a guide RNA.

Functionally, involved in pre-rRNA and tRNA processing. Utilizes the methyl donor S-adenosyl-L-methionine to catalyze the site-specific 2'-hydroxyl methylation of ribose moieties in rRNA and tRNA. Site specificity is provided by a guide RNA that base pairs with the substrate. Methylation occurs at a characteristic distance from the sequence involved in base pairing with the guide RNA. In Methanococcus maripaludis (strain C6 / ATCC BAA-1332), this protein is Fibrillarin-like rRNA/tRNA 2'-O-methyltransferase.